The sequence spans 303 residues: Ribosomal protein L11 methyltransferase (303 aa).

The S-adenosyl-L-methionine site is built by Thr144, Gly165, Asp187, and Asn235.

It belongs to the methyltransferase superfamily. PrmA family.

The protein localises to the cytoplasm. The catalysed reaction is L-lysyl-[protein] + 3 S-adenosyl-L-methionine = N(6),N(6),N(6)-trimethyl-L-lysyl-[protein] + 3 S-adenosyl-L-homocysteine + 3 H(+). Functionally, methylates ribosomal protein L11. This chain is Ribosomal protein L11 methyltransferase, found in Prochlorococcus marinus (strain AS9601).